The primary structure comprises 104 residues: Pyrimidine/purine nucleoside phosphorylase (104 aa).

It belongs to the nucleoside phosphorylase PpnP family.

The catalysed reaction is a purine D-ribonucleoside + phosphate = a purine nucleobase + alpha-D-ribose 1-phosphate. It catalyses the reaction adenosine + phosphate = alpha-D-ribose 1-phosphate + adenine. The enzyme catalyses cytidine + phosphate = cytosine + alpha-D-ribose 1-phosphate. It carries out the reaction guanosine + phosphate = alpha-D-ribose 1-phosphate + guanine. The catalysed reaction is inosine + phosphate = alpha-D-ribose 1-phosphate + hypoxanthine. It catalyses the reaction thymidine + phosphate = 2-deoxy-alpha-D-ribose 1-phosphate + thymine. The enzyme catalyses uridine + phosphate = alpha-D-ribose 1-phosphate + uracil. It carries out the reaction xanthosine + phosphate = alpha-D-ribose 1-phosphate + xanthine. In terms of biological role, catalyzes the phosphorolysis of diverse nucleosides, yielding D-ribose 1-phosphate and the respective free bases. Can use uridine, adenosine, guanosine, cytidine, thymidine, inosine and xanthosine as substrates. Also catalyzes the reverse reactions. This is Pyrimidine/purine nucleoside phosphorylase from Geotalea daltonii (strain DSM 22248 / JCM 15807 / FRC-32) (Geobacter daltonii).